We begin with the raw amino-acid sequence, 279 residues long: Large ribosomal subunit protein uL2 (279 aa).

The segment at 223–279 is disordered; the sequence is PVAMNPVDHPMGGGEGRASGGHPRSRKGLPAKGFKTRSRTKASNKYIVERRKTRKKK. Basic residues predominate over residues 245 to 264; the sequence is PRSRKGLPAKGFKTRSRTKA.

This sequence belongs to the universal ribosomal protein uL2 family. Part of the 50S ribosomal subunit. Forms a bridge to the 30S subunit in the 70S ribosome.

Functionally, one of the primary rRNA binding proteins. Required for association of the 30S and 50S subunits to form the 70S ribosome, for tRNA binding and peptide bond formation. It has been suggested to have peptidyltransferase activity; this is somewhat controversial. Makes several contacts with the 16S rRNA in the 70S ribosome. In Christiangramia forsetii (strain DSM 17595 / CGMCC 1.15422 / KT0803) (Gramella forsetii), this protein is Large ribosomal subunit protein uL2.